A 775-amino-acid polypeptide reads, in one-letter code: Protein STRUBBELIG-RECEPTOR FAMILY 1 (775 aa).

A signal peptide spans 1 to 31; it reads MRSMRSGRDNNICFLGFLSFALISLPSLSLA. The Extracellular segment spans residues 32-314; that stretch reads LTNPDDVAAI…GKEDSFTSKR (283 aa). LRR repeat units lie at residues 101–122, 123–146, 147–169, 171–193, 195–217, and 218–238; these read SLKAMDFSNNHIGGSIPSTLPV, SLQNLFLSGNNFTGTIPESLSSLK, SLSVMSLNNNLLSGKIPDVFQDL, LMINIDLSSNNLSGPLPPSMQNL, TLTSLLLQNNHLSGELDVLQDLP, and LKDLNVENNLFNGPIPEKLLS. An N-linked (GlcNAc...) asparagine glycan is attached at asparagine 133. N-linked (GlcNAc...) asparagine glycosylation is found at asparagine 181 and asparagine 192. Residue asparagine 250 is glycosylated (N-linked (GlcNAc...) asparagine). Residues 254–308 are disordered; sequence APSPSPETPPSPTSPKRPFFGPPSPNASAGHGQAHVRSPPSDHHPSRPTPQGKED. The segment covering 256–278 has biased composition (pro residues); sequence SPSPETPPSPTSPKRPFFGPPSP. Asparagine 279 is a glycosylation site (N-linked (GlcNAc...) asparagine). The chain crosses the membrane as a helical span at residues 315-335; that stretch reads IIWISILGAFSFVVLALVCLL. Topologically, residues 336–775 are cytoplasmic; sequence CGRKCLRKRE…NGDNQYTGRR (440 aa). Residues 345–414 form a disordered region; sequence EDSEQLSKPH…VGSESKQESH (70 aa). Positions 367–379 are enriched in polar residues; it reads RSNASMLPPSNTF. The segment covering 380-391 has biased composition (basic and acidic residues); that stretch reads NKDKEARPKERV. Residues 478-756 enclose the Protein kinase domain; it reads FSHENLIGTG…EVVQDLSDMI (279 aa).

The protein belongs to the protein kinase superfamily. Ser/Thr protein kinase family. As to expression, expressed in roots, stems, leaves and flowers. Low expression in seedlings and siliques.

It localises to the membrane. Its function is as follows. Not essential for epidermal patterning and not redundant with STRUBBELIG. The chain is Protein STRUBBELIG-RECEPTOR FAMILY 1 (SRF1) from Arabidopsis thaliana (Mouse-ear cress).